The following is a 506-amino-acid chain: Maturase K (506 aa).

The protein belongs to the intron maturase 2 family. MatK subfamily.

The protein resides in the plastid. Its subcellular location is the chloroplast. In terms of biological role, usually encoded in the trnK tRNA gene intron. Probably assists in splicing its own and other chloroplast group II introns. In Calluna vulgaris (Heather), this protein is Maturase K.